The chain runs to 732 residues: Prolyl tripeptidyl peptidase (732 aa).

The first 24 residues, 1-24, serve as a signal peptide directing secretion; the sequence is MKKTIFQQLFLSVCALTVALPCSA. Active-site charge relay system residues include Ser-603, Asp-678, and His-710.

The protein belongs to the peptidase S9B family. Post-translationally, the N-terminus is blocked.

The catalysed reaction is Hydrolysis of Xaa-Xaa-Pro-|-Yaa- releasing the N-terminal tripeptide of a peptide with Pro as the third residue (position P1) and where Yaa is not proline.. With respect to regulation, strongly inhibited by diisopropyl fluorophosphate and Pefabloc. Weakly inhibited by 3,4-dichloroisocumarin. Not inhibited by phenylmethylsulfonyl fluoride, leupeptin, antipain or prolinal. Activated by iodoacetamide. Serine proteinase. Releases tripeptides from the free amino terminus of proteins. Has a requirement for Pro in the P1 position, but is inactivated by Pro in the P1' position. This Porphyromonas gingivalis (strain ATCC BAA-308 / W83) protein is Prolyl tripeptidyl peptidase.